The primary structure comprises 309 residues: MEKKNETLWTEFVLTGLTCLPQWKPLLFLVFLVIYFMTIVGNLGLITLIWNDPHLHIPMYLFLSNLAFVDTWLSSTVTPRMLFNLLDKGKVISVAECKTQFFSFAISVTTECFLLAAMAYDRYAAICNPLLYPVIMTNRLCVRLLALSFIGGFLHAVIHESFLSRLTFCNSNIIYHFYCDVIPLLKISCTDPSLNYLIIFIFSGSIQVFTIMTVLISYTFVLFTILKKKSDKGIRKAFSTCGAHLLSVSLYYGPLLFMYVHPASSEVDDQDMILSLFYTVIIPVLNPIIYSLRNKQVIDSLKKMLKMMV.

Residues 1–28 (MEKKNETLWTEFVLTGLTCLPQWKPLLF) lie on the Extracellular side of the membrane. N-linked (GlcNAc...) asparagine glycosylation occurs at asparagine 5. The chain crosses the membrane as a helical span at residues 29–49 (LVFLVIYFMTIVGNLGLITLI). At 50 to 56 (WNDPHLH) the chain is on the cytoplasmic side. A helical membrane pass occupies residues 57 to 77 (IPMYLFLSNLAFVDTWLSSTV). Residues 78–93 (TPRMLFNLLDKGKVIS) lie on the Extracellular side of the membrane. The helical transmembrane segment at 94-114 (VAECKTQFFSFAISVTTECFL) threads the bilayer. Cysteines 97 and 189 form a disulfide. At 115-144 (LAAMAYDRYAAICNPLLYPVIMTNRLCVRL) the chain is on the cytoplasmic side. A helical membrane pass occupies residues 145-165 (LALSFIGGFLHAVIHESFLSR). Over 166–198 (LTFCNSNIIYHFYCDVIPLLKISCTDPSLNYLI) the chain is Extracellular. The chain crosses the membrane as a helical span at residues 199–219 (IFIFSGSIQVFTIMTVLISYT). The Cytoplasmic segment spans residues 220-239 (FVLFTILKKKSDKGIRKAFS). A helical transmembrane segment spans residues 240-260 (TCGAHLLSVSLYYGPLLFMYV). Residues 261 to 271 (HPASSEVDDQD) lie on the Extracellular side of the membrane. A helical transmembrane segment spans residues 272–292 (MILSLFYTVIIPVLNPIIYSL). Residues 293–309 (RNKQVIDSLKKMLKMMV) lie on the Cytoplasmic side of the membrane.

It belongs to the G-protein coupled receptor 1 family.

The protein resides in the cell membrane. Its function is as follows. Potential odorant receptor. This chain is Olfactory receptor 5H17, found in Mus musculus (Mouse).